We begin with the raw amino-acid sequence, 101 residues long: NADH-quinone oxidoreductase subunit K (101 aa).

Transmembrane regions (helical) follow at residues 4 to 24 (LGHM…GIFL), 30 to 50 (IVLL…FVGF), and 62 to 82 (FVFF…AILV).

The protein belongs to the complex I subunit 4L family. NDH-1 is composed of 14 different subunits. Subunits NuoA, H, J, K, L, M, N constitute the membrane sector of the complex.

It is found in the cell inner membrane. The catalysed reaction is a quinone + NADH + 5 H(+)(in) = a quinol + NAD(+) + 4 H(+)(out). In terms of biological role, NDH-1 shuttles electrons from NADH, via FMN and iron-sulfur (Fe-S) centers, to quinones in the respiratory chain. The immediate electron acceptor for the enzyme in this species is believed to be ubiquinone. Couples the redox reaction to proton translocation (for every two electrons transferred, four hydrogen ions are translocated across the cytoplasmic membrane), and thus conserves the redox energy in a proton gradient. The protein is NADH-quinone oxidoreductase subunit K of Stenotrophomonas maltophilia (strain K279a).